The following is a 256-amino-acid chain: MDKPLVIAGRSFQSRLLLGTGKFSSSEAMKRAIEASGSEVVTVALRRVELENPQDSILSAIDTSRYLLLPNTSGARDALEAVRLARLARAAGCEPWVKLEVTPDPHYLLPDPVETLKAAEILIKEGFIVLPYINADPILAKRLEDLGAATVMPLGSPIGSNRGIRTRDSIAIIIEKANVPVVVDAGLGAPSHAAEAMEMGADAVLVNTAIAVAGDPEAMAKAFRKGVEAGREAYLAGLGSTRATAEASSPLTGFLR.

K98 functions as the Schiff-base intermediate with DXP in the catalytic mechanism. Residues G159, 185–186 (AG), and 207–208 (NT) each bind 1-deoxy-D-xylulose 5-phosphate.

Belongs to the ThiG family. As to quaternary structure, homotetramer. Forms heterodimers with either ThiH or ThiS.

It localises to the cytoplasm. The catalysed reaction is [ThiS sulfur-carrier protein]-C-terminal-Gly-aminoethanethioate + 2-iminoacetate + 1-deoxy-D-xylulose 5-phosphate = [ThiS sulfur-carrier protein]-C-terminal Gly-Gly + 2-[(2R,5Z)-2-carboxy-4-methylthiazol-5(2H)-ylidene]ethyl phosphate + 2 H2O + H(+). It functions in the pathway cofactor biosynthesis; thiamine diphosphate biosynthesis. Functionally, catalyzes the rearrangement of 1-deoxy-D-xylulose 5-phosphate (DXP) to produce the thiazole phosphate moiety of thiamine. Sulfur is provided by the thiocarboxylate moiety of the carrier protein ThiS. In vitro, sulfur can be provided by H(2)S. The polypeptide is Thiazole synthase (Syntrophobacter fumaroxidans (strain DSM 10017 / MPOB)).